Reading from the N-terminus, the 68-residue chain is DNA-directed RNA polymerase subunit omega (68 aa).

This sequence belongs to the RNA polymerase subunit omega family. As to quaternary structure, the RNAP catalytic core consists of 2 alpha, 1 beta, 1 beta' and 1 omega subunit. When a sigma factor is associated with the core the holoenzyme is formed, which can initiate transcription.

The enzyme catalyses RNA(n) + a ribonucleoside 5'-triphosphate = RNA(n+1) + diphosphate. Functionally, promotes RNA polymerase assembly. Latches the N- and C-terminal regions of the beta' subunit thereby facilitating its interaction with the beta and alpha subunits. In Neisseria meningitidis serogroup C (strain 053442), this protein is DNA-directed RNA polymerase subunit omega.